A 398-amino-acid chain; its full sequence is Ornithine aminotransferase (398 aa).

Lys256 bears the N6-(pyridoxal phosphate)lysine mark.

The protein belongs to the class-III pyridoxal-phosphate-dependent aminotransferase family. OAT subfamily. It depends on pyridoxal 5'-phosphate as a cofactor.

It is found in the cytoplasm. The enzyme catalyses a 2-oxocarboxylate + L-ornithine = L-glutamate 5-semialdehyde + an L-alpha-amino acid. The protein operates within amino-acid biosynthesis; L-proline biosynthesis; L-glutamate 5-semialdehyde from L-ornithine: step 1/1. Its function is as follows. Catalyzes the interconversion of ornithine to glutamate semialdehyde. The sequence is that of Ornithine aminotransferase from Halalkalibacterium halodurans (strain ATCC BAA-125 / DSM 18197 / FERM 7344 / JCM 9153 / C-125) (Bacillus halodurans).